The sequence spans 427 residues: Endothelin-1 receptor (427 aa).

A signal peptide spans methionine 1–serine 20. The Extracellular segment spans residues aspartate 21–lysine 80. Residues asparagine 29 and asparagine 62 are each glycosylated (N-linked (GlcNAc...) asparagine). A helical transmembrane segment spans residues tyrosine 81 to leucine 102. Over arginine 103–arginine 112 the chain is Cytoplasmic. The chain crosses the membrane as a helical span at residues asparagine 113–isoleucine 132. Topologically, residues aspartate 133–lysine 159 are extracellular. A disulfide bridge connects residues cysteine 158 and cysteine 239. A helical transmembrane segment spans residues leucine 160–valine 181. At aspartate 182 to glutamate 205 the chain is on the cytoplasmic side. The helical transmembrane segment at isoleucine 206–phenylalanine 229 threads the bilayer. The Extracellular portion of the chain corresponds to glutamate 230 to aspartate 256. The helical transmembrane segment at tryptophan 257–methionine 278 threads the bilayer. The Cytoplasmic segment spans residues threonine 279–lysine 306. The helical transmembrane segment at threonine 307–leucine 328 threads the bilayer. The Extracellular portion of the chain corresponds to lysine 329–leucine 347. A helical transmembrane segment spans residues leucine 348–valine 372. The Cytoplasmic segment spans residues serine 373–asparagine 427. A compositionally biased stretch (polar residues) spans isoleucine 405 to histidine 415. Residues isoleucine 405–asparagine 427 are disordered. A compositionally biased stretch (basic and acidic residues) spans asparagine 416 to asparagine 427. Phosphoserine is present on serine 425.

The protein belongs to the G-protein coupled receptor 1 family. Endothelin receptor subfamily. EDNRA sub-subfamily. In terms of assembly, interacts with HDAC7 and KAT5.

The protein localises to the cell membrane. Its function is as follows. Receptor for endothelin-1. Mediates its action by association with G proteins that activate a phosphatidylinositol-calcium second messenger system. The rank order of binding affinities for ET-A is: ET1 &gt; ET2 &gt;&gt; ET3. This is Endothelin-1 receptor from Ovis aries (Sheep).